Consider the following 286-residue polypeptide: ATP synthase gamma chain (286 aa).

Belongs to the ATPase gamma chain family. In terms of assembly, F-type ATPases have 2 components, CF(1) - the catalytic core - and CF(0) - the membrane proton channel. CF(1) has five subunits: alpha(3), beta(3), gamma(1), delta(1), epsilon(1). CF(0) has three main subunits: a, b and c.

Its subcellular location is the cell membrane. Functionally, produces ATP from ADP in the presence of a proton gradient across the membrane. The gamma chain is believed to be important in regulating ATPase activity and the flow of protons through the CF(0) complex. The sequence is that of ATP synthase gamma chain from Ureaplasma urealyticum serovar 10 (strain ATCC 33699 / Western).